Reading from the N-terminus, the 853-residue chain is DNA mismatch repair protein MutS (853 aa).

An ATP-binding site is contributed by 614–621 (GPNMGGKS).

This sequence belongs to the DNA mismatch repair MutS family.

This protein is involved in the repair of mismatches in DNA. It is possible that it carries out the mismatch recognition step. This protein has a weak ATPase activity. The chain is DNA mismatch repair protein MutS from Escherichia coli O127:H6 (strain E2348/69 / EPEC).